Consider the following 473-residue polypeptide: Cyprosin (473 aa).

Residues 1 to 33 (LKKRKVNILNHPGEHAGSNDANARRKYGVRGNF) constitute a propeptide, activation peptide. The Peptidase A1 domain maps to 51-470 (YFGEIGIGTP…DYGNLRVGFA (420 aa)). Aspartate 69 is an active-site residue. Cystine bridges form between cysteine 82–cysteine 88 and cysteine 247–cysteine 251. Aspartate 256 is an active-site residue. Positions 281–384 (VMSQQCKSLV…DKLCERLPSP (104 aa)) constitute a Saposin B-type domain. 4 disulfide bridges follow: cysteine 286–cysteine 378, cysteine 311–cysteine 350, cysteine 317–cysteine 347, and cysteine 392–cysteine 429. Asparagine 364 is a glycosylation site (N-linked (GlcNAc...) asparagine).

The protein belongs to the peptidase A1 family. In terms of tissue distribution, mostly present in the violet parts of styles and corollas of mature flowers.

This is Cyprosin (CYPRO1) from Cynara cardunculus (Cardoon).